The primary structure comprises 172 residues: Single-stranded DNA-binding protein A (172 aa).

One can recognise an SSB domain in the interval M1–E104. At Y82 the chain carries Phosphotyrosine. A disordered region spans residues L103–F172. The segment covering N107 to Q131 has biased composition (gly residues). Residues N132–N149 are compositionally biased toward low complexity. Positions D167 to F172 match the Important for interaction with partner proteins motif.

In terms of assembly, homotetramer. Interacts with proteins involved in DNA metabolism such as PriA, RecQ, RecG, RecS, DnaE, RarA, RecJ, RecO, SbcC, RecD2 (formerly YrrC), XseA and Ung. Interacts with RecQ via its 10 C-terminal residues. Interacts with RecD2. Phosphorylated by YwqD, which increases ssDNA affinity; dephosphorylated by YwqE.

It is found in the cytoplasm. The protein localises to the nucleoid. Its function is as follows. Plays an important role in DNA replication, recombination and repair. Binds to single-stranded (ss)DNA and to an array of partner proteins to recruit them to their sites of action during DNA metabolism. Associates with oriC, this requires DnaA. SsbA binding to ssDNA prevents DnaB and DnaD individually from binding to DNA. Has a 20-fold higher affinity for ssDNA than SsbB; SsbA and DprA activate the homologous DNA strand exchange function of RecA-ATP. Enhances the activity of 3'-5' DNA helicase RecQ. In Bacillus subtilis (strain 168), this protein is Single-stranded DNA-binding protein A (ssbA).